A 299-amino-acid chain; its full sequence is Acetaldehyde dehydrogenase (299 aa).

Residue Cys-126 is the Acyl-thioester intermediate of the active site. NAD(+) is bound by residues 157–165 (SAGPGTRQN) and Asn-267.

It belongs to the acetaldehyde dehydrogenase family.

The enzyme catalyses acetaldehyde + NAD(+) + CoA = acetyl-CoA + NADH + H(+). The sequence is that of Acetaldehyde dehydrogenase (mhpF) from Carboxydothermus hydrogenoformans (strain ATCC BAA-161 / DSM 6008 / Z-2901).